A 341-amino-acid polypeptide reads, in one-letter code: L-threonine 3-dehydrogenase (341 aa).

Residue Cys-38 participates in Zn(2+) binding. Residues Thr-40 and His-43 each act as charge relay system in the active site. Zn(2+) contacts are provided by His-63, Glu-64, Cys-93, Cys-96, Cys-99, and Cys-107. Residues Ile-175, Asp-195, Arg-200, 262–264, and 286–287 each bind NAD(+); these read LGI and IY.

The protein belongs to the zinc-containing alcohol dehydrogenase family. Homotetramer. Zn(2+) serves as cofactor.

Its subcellular location is the cytoplasm. It carries out the reaction L-threonine + NAD(+) = (2S)-2-amino-3-oxobutanoate + NADH + H(+). Its pathway is amino-acid degradation; L-threonine degradation via oxydo-reductase pathway; glycine from L-threonine: step 1/2. Catalyzes the NAD(+)-dependent oxidation of L-threonine to 2-amino-3-ketobutyrate. This Shewanella loihica (strain ATCC BAA-1088 / PV-4) protein is L-threonine 3-dehydrogenase.